Reading from the N-terminus, the 86-residue chain is Large ribosomal subunit protein bL31 (86 aa).

Residues 65–86 (YRMASSDSSEQKDKSSEEKKES) form a disordered region. Residues 73 to 86 (SEQKDKSSEEKKES) show a composition bias toward basic and acidic residues.

The protein belongs to the bacterial ribosomal protein bL31 family. Type A subfamily. As to quaternary structure, part of the 50S ribosomal subunit.

Its function is as follows. Binds the 23S rRNA. This chain is Large ribosomal subunit protein bL31, found in Prochlorococcus marinus (strain NATL1A).